Consider the following 1208-residue polypeptide: Putative protease AXL1 (1208 aa).

A Zn(2+)-binding site is contributed by His68. Glu71 acts as the Proton acceptor in catalysis. Residues His72 and Glu156 each contribute to the Zn(2+) site. Ser262 bears the Phosphoserine mark.

This sequence belongs to the peptidase M16 family. Interacts with BUD5. The cofactor is Zn(2+).

The protein resides in the bud neck. Probable protease. Involved in axial budding. The polypeptide is Putative protease AXL1 (AXL1) (Saccharomyces cerevisiae (strain ATCC 204508 / S288c) (Baker's yeast)).